We begin with the raw amino-acid sequence, 387 residues long: Acetylornithine deacetylase (387 aa).

H80 contributes to the Zn(2+) binding site. Residue D82 is part of the active site. D112 contributes to the Zn(2+) binding site. E144 is a catalytic residue. Residues E145, E169, and H355 each contribute to the Zn(2+) site.

The protein belongs to the peptidase M20A family. ArgE subfamily. As to quaternary structure, homodimer. Zn(2+) serves as cofactor. Requires Co(2+) as cofactor. Glutathione is required as a cofactor.

Its subcellular location is the cytoplasm. It catalyses the reaction N(2)-acetyl-L-ornithine + H2O = L-ornithine + acetate. Its pathway is amino-acid biosynthesis; L-arginine biosynthesis; L-ornithine from N(2)-acetyl-L-ornithine (linear): step 1/1. Catalyzes the hydrolysis of the amide bond of N(2)-acetylated L-amino acids. Cleaves the acetyl group from N-acetyl-L-ornithine to form L-ornithine, an intermediate in L-arginine biosynthesis pathway, and a branchpoint in the synthesis of polyamines. The polypeptide is Acetylornithine deacetylase (Proteus mirabilis (strain HI4320)).